We begin with the raw amino-acid sequence, 174 residues long: Gamma-crystallin F (174 aa).

Beta/gamma crystallin 'Greek key' domains follow at residues 2-40 (GKITFYEDRGFQGRHYECSTDHSNLQPYFSRCNSVRVDS) and 41-83 (GCWM…HLIP). The connecting peptide stretch occupies residues 84 to 87 (HSSS). Beta/gamma crystallin 'Greek key' domains are found at residues 88-128 (HRIR…HVIE) and 129-171 (GYWV…RRIM).

This sequence belongs to the beta/gamma-crystallin family.

Functionally, crystallins are the dominant structural components of the vertebrate eye lens. The polypeptide is Gamma-crystallin F (Crygf) (Rattus norvegicus (Rat)).